The chain runs to 399 residues: UDP-N-acetylglucosamine--N-acetylmuramyl-(pentapeptide) pyrophosphoryl-undecaprenol N-acetylglucosamine transferase (399 aa).

Over residues methionine 1 to alanine 21 the composition is skewed to basic residues. Residues methionine 1 to asparagine 30 form a disordered region. UDP-N-acetyl-alpha-D-glucosamine contacts are provided by residues threonine 58–glycine 60, asparagine 170, arginine 206, serine 234, isoleucine 288, and glutamine 333.

Belongs to the glycosyltransferase 28 family. MurG subfamily.

It localises to the cell inner membrane. It carries out the reaction di-trans,octa-cis-undecaprenyl diphospho-N-acetyl-alpha-D-muramoyl-L-alanyl-D-glutamyl-meso-2,6-diaminopimeloyl-D-alanyl-D-alanine + UDP-N-acetyl-alpha-D-glucosamine = di-trans,octa-cis-undecaprenyl diphospho-[N-acetyl-alpha-D-glucosaminyl-(1-&gt;4)]-N-acetyl-alpha-D-muramoyl-L-alanyl-D-glutamyl-meso-2,6-diaminopimeloyl-D-alanyl-D-alanine + UDP + H(+). The protein operates within cell wall biogenesis; peptidoglycan biosynthesis. Cell wall formation. Catalyzes the transfer of a GlcNAc subunit on undecaprenyl-pyrophosphoryl-MurNAc-pentapeptide (lipid intermediate I) to form undecaprenyl-pyrophosphoryl-MurNAc-(pentapeptide)GlcNAc (lipid intermediate II). In Acidovorax ebreus (strain TPSY) (Diaphorobacter sp. (strain TPSY)), this protein is UDP-N-acetylglucosamine--N-acetylmuramyl-(pentapeptide) pyrophosphoryl-undecaprenol N-acetylglucosamine transferase.